Consider the following 123-residue polypeptide: Fluoride-specific ion channel FluC (123 aa).

The next 4 membrane-spanning stretches (helical) occupy residues 5–25, 35–55, 67–87, and 100–120; these read IIALLIIGGGLGALTRYYISG, IGTLIVNSLASFLLGYIYGLL, IFLGTGFCGGLSTFSTFSYET, and FANITTNILVTIFLVFLGFIL. G75 and S78 together coordinate Na(+).

This sequence belongs to the fluoride channel Fluc/FEX (TC 1.A.43) family.

The protein resides in the cell membrane. The catalysed reaction is fluoride(in) = fluoride(out). Na(+) is not transported, but it plays an essential structural role and its presence is essential for fluoride channel function. In terms of biological role, fluoride-specific ion channel. Important for reducing fluoride concentration in the cell, thus reducing its toxicity. The polypeptide is Fluoride-specific ion channel FluC (Pyrococcus horikoshii (strain ATCC 700860 / DSM 12428 / JCM 9974 / NBRC 100139 / OT-3)).